The primary structure comprises 383 residues: 1-deoxy-D-xylulose 5-phosphate reductoisomerase (383 aa).

T10, G11, S12, I13, and N123 together coordinate NADPH. K124 provides a ligand contact to 1-deoxy-D-xylulose 5-phosphate. E125 provides a ligand contact to NADPH. Position 149 (D149) interacts with Mn(2+). Positions 150, 151, 175, and 198 each coordinate 1-deoxy-D-xylulose 5-phosphate. E151 serves as a coordination point for Mn(2+). G204 provides a ligand contact to NADPH. Residues S211, N216, K217, and E220 each contribute to the 1-deoxy-D-xylulose 5-phosphate site. E220 is a binding site for Mn(2+).

This sequence belongs to the DXR family. Requires Mg(2+) as cofactor. It depends on Mn(2+) as a cofactor.

It catalyses the reaction 2-C-methyl-D-erythritol 4-phosphate + NADP(+) = 1-deoxy-D-xylulose 5-phosphate + NADPH + H(+). The protein operates within isoprenoid biosynthesis; isopentenyl diphosphate biosynthesis via DXP pathway; isopentenyl diphosphate from 1-deoxy-D-xylulose 5-phosphate: step 1/6. Functionally, catalyzes the NADPH-dependent rearrangement and reduction of 1-deoxy-D-xylulose-5-phosphate (DXP) to 2-C-methyl-D-erythritol 4-phosphate (MEP). The sequence is that of 1-deoxy-D-xylulose 5-phosphate reductoisomerase from Desulfosudis oleivorans (strain DSM 6200 / JCM 39069 / Hxd3) (Desulfococcus oleovorans).